The sequence spans 358 residues: Protein-arginine kinase (358 aa).

A Phosphagen kinase C-terminal domain is found at 23-250; that stretch reads VWPVTTFSLA…SKLSVAEVAA (228 aa). Residues 26–30, 174–178, and 203–208 each bind ATP; these read VTTFS, KSQCF, and SSLLLG.

The protein belongs to the ATP:guanido phosphotransferase family.

The catalysed reaction is L-arginyl-[protein] + ATP = N(omega)-phospho-L-arginyl-[protein] + ADP + H(+). Its function is as follows. Catalyzes the specific phosphorylation of arginine residues in proteins. The chain is Protein-arginine kinase from Chlamydia pneumoniae (Chlamydophila pneumoniae).